A 68-amino-acid polypeptide reads, in one-letter code: Antimicrobial peptide UyCT5 (68 aa).

The first 23 residues, 1 to 23 (MKNQFAILLLAVVFLQLISQSDA), serve as a signal peptide directing secretion. L36 carries the post-translational modification Leucine amide. Positions 40–68 (GLKNADRLDELFDGDISDADLDFLRELMR) are excised as a propeptide.

The protein belongs to the non-disulfide-bridged peptide (NDBP) superfamily. Short antimicrobial peptide (group 4) family. In terms of tissue distribution, expressed by the venom gland.

Its subcellular location is the secreted. It is found in the target cell membrane. In terms of biological role, antimicrobial peptide that inhibits the growth of Gram-positive (S.aureus, MIC=1 uM) and Gram-negative bacteria (E.coli, MIC=15 uM and P.aeruginosa, MIC=2 uM). It also shows 37% of hemolysis when 15 uM are tested (93% at 50 uM). This chain is Antimicrobial peptide UyCT5, found in Urodacus yaschenkoi (Inland robust scorpion).